The following is a 227-amino-acid chain: Cytochrome c oxidase subunit 2 (227 aa).

Residues 1–14 (MAYPFQLGLXDATS) are Mitochondrial intermembrane-facing. Residues 15–45 (PIMEELLHFHDHTLMIVFLISSLVLYIITLM) traverse the membrane as a helical segment. Over 46 to 59 (LTTKLTHTSTMDAQ) the chain is Mitochondrial matrix. Residues 60–87 (EVETVWTILPAIILILIALPSLRILYMM) form a helical membrane-spanning segment. Residues 88–227 (DEINNPSLTV…YFETWSAVMV (140 aa)) are Mitochondrial intermembrane-facing. The Cu cation site is built by His-161, Cys-196, Glu-198, Cys-200, His-204, and Met-207. Position 198 (Glu-198) interacts with Mg(2+).

Belongs to the cytochrome c oxidase subunit 2 family. Component of the cytochrome c oxidase (complex IV, CIV), a multisubunit enzyme composed of 14 subunits. The complex is composed of a catalytic core of 3 subunits MT-CO1, MT-CO2 and MT-CO3, encoded in the mitochondrial DNA, and 11 supernumerary subunits COX4I, COX5A, COX5B, COX6A, COX6B, COX6C, COX7A, COX7B, COX7C, COX8 and NDUFA4, which are encoded in the nuclear genome. The complex exists as a monomer or a dimer and forms supercomplexes (SCs) in the inner mitochondrial membrane with NADH-ubiquinone oxidoreductase (complex I, CI) and ubiquinol-cytochrome c oxidoreductase (cytochrome b-c1 complex, complex III, CIII), resulting in different assemblies (supercomplex SCI(1)III(2)IV(1) and megacomplex MCI(2)III(2)IV(2)). Found in a complex with TMEM177, COA6, COX18, COX20, SCO1 and SCO2. Interacts with TMEM177 in a COX20-dependent manner. Interacts with COX20. Interacts with COX16. Cu cation is required as a cofactor.

It is found in the mitochondrion inner membrane. It catalyses the reaction 4 Fe(II)-[cytochrome c] + O2 + 8 H(+)(in) = 4 Fe(III)-[cytochrome c] + 2 H2O + 4 H(+)(out). In terms of biological role, component of the cytochrome c oxidase, the last enzyme in the mitochondrial electron transport chain which drives oxidative phosphorylation. The respiratory chain contains 3 multisubunit complexes succinate dehydrogenase (complex II, CII), ubiquinol-cytochrome c oxidoreductase (cytochrome b-c1 complex, complex III, CIII) and cytochrome c oxidase (complex IV, CIV), that cooperate to transfer electrons derived from NADH and succinate to molecular oxygen, creating an electrochemical gradient over the inner membrane that drives transmembrane transport and the ATP synthase. Cytochrome c oxidase is the component of the respiratory chain that catalyzes the reduction of oxygen to water. Electrons originating from reduced cytochrome c in the intermembrane space (IMS) are transferred via the dinuclear copper A center (CU(A)) of subunit 2 and heme A of subunit 1 to the active site in subunit 1, a binuclear center (BNC) formed by heme A3 and copper B (CU(B)). The BNC reduces molecular oxygen to 2 water molecules using 4 electrons from cytochrome c in the IMS and 4 protons from the mitochondrial matrix. The polypeptide is Cytochrome c oxidase subunit 2 (MT-CO2) (Vulpes corsac (Corsac fox)).